The primary structure comprises 306 residues: Agmatinase (306 aa).

Residues His-126, Asp-149, His-151, Asp-153, Asp-230, and Asp-232 each contribute to the Mn(2+) site.

Belongs to the arginase family. Agmatinase subfamily. Mn(2+) is required as a cofactor.

The enzyme catalyses agmatine + H2O = urea + putrescine. It functions in the pathway amine and polyamine biosynthesis; putrescine biosynthesis via agmatine pathway; putrescine from agmatine: step 1/1. Catalyzes the formation of putrescine from agmatine. The protein is Agmatinase of Shigella dysenteriae serotype 1 (strain Sd197).